The primary structure comprises 276 residues: Imidazole glycerol phosphate synthase subunit HisF (276 aa).

Active-site residues include aspartate 11 and aspartate 130.

The protein belongs to the HisA/HisF family. As to quaternary structure, heterodimer of HisH and HisF.

The protein localises to the cytoplasm. The enzyme catalyses 5-[(5-phospho-1-deoxy-D-ribulos-1-ylimino)methylamino]-1-(5-phospho-beta-D-ribosyl)imidazole-4-carboxamide + L-glutamine = D-erythro-1-(imidazol-4-yl)glycerol 3-phosphate + 5-amino-1-(5-phospho-beta-D-ribosyl)imidazole-4-carboxamide + L-glutamate + H(+). It functions in the pathway amino-acid biosynthesis; L-histidine biosynthesis; L-histidine from 5-phospho-alpha-D-ribose 1-diphosphate: step 5/9. Its function is as follows. IGPS catalyzes the conversion of PRFAR and glutamine to IGP, AICAR and glutamate. The HisF subunit catalyzes the cyclization activity that produces IGP and AICAR from PRFAR using the ammonia provided by the HisH subunit. The chain is Imidazole glycerol phosphate synthase subunit HisF from Beijerinckia indica subsp. indica (strain ATCC 9039 / DSM 1715 / NCIMB 8712).